Here is a 454-residue protein sequence, read N- to C-terminus: tRNA modification GTPase MnmE (454 aa).

Arginine 23, glutamate 80, and lysine 120 together coordinate (6S)-5-formyl-5,6,7,8-tetrahydrofolate. In terms of domain architecture, TrmE-type G spans 216–377 (GMKVVIAGRP…LRNHLKQSMG (162 aa)). Position 226 (asparagine 226) interacts with K(+). GTP is bound by residues 226 to 231 (NAGKSS), 245 to 251 (TDIAGTT), 270 to 273 (DTAG), 335 to 338 (NKAD), and 358 to 360 (SAR). Residue serine 230 participates in Mg(2+) binding. K(+) is bound by residues threonine 245, isoleucine 247, and threonine 250. Position 251 (threonine 251) interacts with Mg(2+). (6S)-5-formyl-5,6,7,8-tetrahydrofolate is bound at residue lysine 454.

It belongs to the TRAFAC class TrmE-Era-EngA-EngB-Septin-like GTPase superfamily. TrmE GTPase family. As to quaternary structure, homodimer. Heterotetramer of two MnmE and two MnmG subunits. The cofactor is K(+).

The protein resides in the cytoplasm. Its function is as follows. Exhibits a very high intrinsic GTPase hydrolysis rate. Involved in the addition of a carboxymethylaminomethyl (cmnm) group at the wobble position (U34) of certain tRNAs, forming tRNA-cmnm(5)s(2)U34. The polypeptide is tRNA modification GTPase MnmE (Escherichia coli O127:H6 (strain E2348/69 / EPEC)).